A 445-amino-acid polypeptide reads, in one-letter code: Probable glycine dehydrogenase (decarboxylating) subunit 1 (445 aa).

The protein belongs to the GcvP family. N-terminal subunit subfamily. The glycine cleavage system is composed of four proteins: P, T, L and H. In this organism, the P 'protein' is a heterodimer of two subunits.

It carries out the reaction N(6)-[(R)-lipoyl]-L-lysyl-[glycine-cleavage complex H protein] + glycine + H(+) = N(6)-[(R)-S(8)-aminomethyldihydrolipoyl]-L-lysyl-[glycine-cleavage complex H protein] + CO2. The glycine cleavage system catalyzes the degradation of glycine. The P protein binds the alpha-amino group of glycine through its pyridoxal phosphate cofactor; CO(2) is released and the remaining methylamine moiety is then transferred to the lipoamide cofactor of the H protein. The protein is Probable glycine dehydrogenase (decarboxylating) subunit 1 of Anaeromyxobacter sp. (strain Fw109-5).